A 126-amino-acid chain; its full sequence is Histone H2B type 1-B (126 aa).

A compositionally biased stretch (low complexity) spans 1 to 12; that stretch reads MPEPSKSAPAPK. The interval 1–36 is disordered; sequence MPEPSKSAPAPKKGSKKAISKAQKKDGKKRKRSRKE. Residue P2 is modified to N-acetylproline. At E3 the chain carries ADP-ribosyl glutamic acid. N6-(2-hydroxyisobutyryl)lysine; alternate is present on K6. K6 carries the N6-(beta-hydroxybutyryl)lysine; alternate modification. The residue at position 6 (K6) is an N6-acetyllysine; alternate. K6 is subject to N6-butyryllysine; alternate. K6 carries the post-translational modification N6-crotonyllysine; alternate. K6 is subject to N6-lactoyllysine; alternate. K6 is covalently cross-linked (Glycyl lysine isopeptide (Lys-Gly) (interchain with G-Cter in SUMO2); alternate). S7 is modified (ADP-ribosylserine). An N6-(beta-hydroxybutyryl)lysine; alternate modification is found at K12. K12 and K13 each carry N6-acetyllysine; alternate. 2 positions are modified to N6-crotonyllysine; alternate: K12 and K13. N6-lactoyllysine; alternate is present on K12. Position 13 is an N6-(2-hydroxyisobutyryl)lysine; alternate (K13). S15 carries the post-translational modification Phosphoserine; by STK4/MST1. Residues K16, K17, K21, and K24 each carry the N6-acetyllysine; alternate modification. An N6-crotonyllysine; alternate mark is found at K16, K17, K21, and K24. Residues K16, K17, K21, and K24 each carry the N6-lactoyllysine; alternate modification. K17 carries the post-translational modification N6-glutaryllysine; alternate. N6-(2-hydroxyisobutyryl)lysine; alternate occurs at positions 21 and 24. K21 is modified (N6-(beta-hydroxybutyryl)lysine; alternate). N6-butyryllysine; alternate is present on K21. Residue K21 forms a Glycyl lysine isopeptide (Lys-Gly) (interchain with G-Cter in SUMO2); alternate linkage. K25 is modified (N6-(2-hydroxyisobutyryl)lysine). Position 35 is an N6-(2-hydroxyisobutyryl)lysine; alternate (K35). Position 35 is an N6-(beta-hydroxybutyryl)lysine; alternate (K35). N6-crotonyllysine; alternate is present on K35. N6-glutaryllysine; alternate is present on K35. N6-succinyllysine; alternate is present on K35. Residue K35 forms a Glycyl lysine isopeptide (Lys-Gly) (interchain with G-Cter in ubiquitin); alternate linkage. E36 bears the PolyADP-ribosyl glutamic acid mark. S37 is modified (phosphoserine; by AMPK). 3 positions are modified to N6-(2-hydroxyisobutyryl)lysine; alternate: K44, K47, and K58. K44 bears the N6-lactoyllysine; alternate mark. 2 positions are modified to N6-glutaryllysine; alternate: K44 and K47. K47 bears the N6-methyllysine; alternate mark. Residue K58 is modified to N6,N6-dimethyllysine; alternate. At R80 the chain carries Dimethylated arginine. At K86 the chain carries N6-(2-hydroxyisobutyryl)lysine; alternate. Position 86 is an N6-acetyllysine; alternate (K86). K86 is modified (N6-lactoyllysine; alternate). K86 carries the post-translational modification N6,N6,N6-trimethyllysine; alternate. 2 positions are modified to omega-N-methylarginine: R87 and R93. K109 carries the post-translational modification N6-(2-hydroxyisobutyryl)lysine; alternate. K109 carries the N6-(beta-hydroxybutyryl)lysine; alternate modification. N6-lactoyllysine; alternate is present on K109. At K109 the chain carries N6-glutaryllysine; alternate. Residue K109 is modified to N6-methyllysine; alternate. The O-linked (GlcNAc) serine glycan is linked to S113. Position 116 is a phosphothreonine (T116). Residues K117 and K121 each carry the N6-(2-hydroxyisobutyryl)lysine; alternate modification. N6-(beta-hydroxybutyryl)lysine; alternate is present on K117. N6-lactoyllysine; alternate occurs at positions 117 and 121. N6-glutaryllysine; alternate is present on residues K117 and K121. An N6-succinyllysine; alternate mark is found at K117 and K121. K117 is modified (N6-methylated lysine; alternate). K121 is covalently cross-linked (Glycyl lysine isopeptide (Lys-Gly) (interchain with G-Cter in ubiquitin); alternate).

This sequence belongs to the histone H2B family. As to quaternary structure, the nucleosome is a histone octamer containing two molecules each of H2A, H2B, H3 and H4 assembled in one H3-H4 heterotetramer and two H2A-H2B heterodimers. The octamer wraps approximately 147 bp of DNA. Post-translationally, monoubiquitination at Lys-35 (H2BK34Ub) by the MSL1/MSL2 dimer is required for histone H3 'Lys-4' (H3K4me) and 'Lys-79' (H3K79me) methylation and transcription activation at specific gene loci, such as HOXA9 and MEIS1 loci. Similarly, monoubiquitination at Lys-121 (H2BK120Ub) by the RNF20/40 complex gives a specific tag for epigenetic transcriptional activation and is also prerequisite for histone H3 'Lys-4' and 'Lys-79' methylation. It also functions cooperatively with the FACT dimer to stimulate elongation by RNA polymerase II. H2BK120Ub also acts as a regulator of mRNA splicing: deubiquitination by USP49 is required for efficient cotranscriptional splicing of a large set of exons. Phosphorylated on Ser-15 (H2BS14ph) by STK4/MST1 during apoptosis; which facilitates apoptotic chromatin condensation. Also phosphorylated on Ser-15 in response to DNA double strand breaks (DSBs), and in correlation with somatic hypermutation and immunoglobulin class-switch recombination. Phosphorylation at Ser-37 (H2BS36ph) by AMPK in response to stress promotes transcription. In terms of processing, glcNAcylation at Ser-113 promotes monoubiquitination of Lys-121. It fluctuates in response to extracellular glucose, and associates with transcribed genes. Post-translationally, ADP-ribosylated by PARP1 or PARP2 on Ser-7 (H2BS6ADPr) in response to DNA damage. H2BS6ADPr promotes recruitment of CHD1L. Mono-ADP-ribosylated on Glu-3 (H2BE2ADPr) by PARP3 in response to single-strand breaks. Poly ADP-ribosylation on Glu-36 (H2BE35ADPr) by PARP1 regulates adipogenesis: it inhibits phosphorylation at Ser-37 (H2BS36ph), thereby blocking expression of pro-adipogenetic genes. Hydroxybutyrylation of histones is induced by starvation. In terms of processing, crotonylation (Kcr) is specifically present in male germ cells and marks testis-specific genes in post-meiotic cells, including X-linked genes that escape sex chromosome inactivation in haploid cells. Crotonylation marks active promoters and enhancers and confers resistance to transcriptional repressors. It is also associated with post-meiotically activated genes on autosomes. Post-translationally, lactylated in macrophages by EP300/P300 by using lactoyl-CoA directly derived from endogenous or exogenous lactate, leading to stimulates gene transcription.

The protein resides in the nucleus. The protein localises to the chromosome. In terms of biological role, core component of nucleosome. Nucleosomes wrap and compact DNA into chromatin, limiting DNA accessibility to the cellular machineries which require DNA as a template. Histones thereby play a central role in transcription regulation, DNA repair, DNA replication and chromosomal stability. DNA accessibility is regulated via a complex set of post-translational modifications of histones, also called histone code, and nucleosome remodeling. This chain is Histone H2B type 1-B, found in Mus musculus (Mouse).